A 163-amino-acid chain; its full sequence is uncharacterized protein (163 aa).

The tract at residues 23–113 is disordered; the sequence is DFPEEPPLWV…QVADGVHSQQ (91 aa). S102 carries the phosphoserine modification.

This is an uncharacterized protein from Mus musculus (Mouse).